We begin with the raw amino-acid sequence, 455 residues long: F-box/LRR-repeat protein At5g35995 (455 aa).

Residues Arg-4 to Glu-51 enclose the F-box domain. 5 LRR repeats span residues Asp-114–Thr-138, Phe-152–Gly-176, Ile-282–Met-305, Phe-308–Trp-324, and Gln-325–Lys-348.

The chain is F-box/LRR-repeat protein At5g35995 from Arabidopsis thaliana (Mouse-ear cress).